Consider the following 281-residue polypeptide: Bifunctional protein FolD (281 aa).

NADP(+) is bound by residues 165-167 (GRG), Thr-192, and Val-233.

Belongs to the tetrahydrofolate dehydrogenase/cyclohydrolase family. In terms of assembly, homodimer.

It catalyses the reaction (6R)-5,10-methylene-5,6,7,8-tetrahydrofolate + NADP(+) = (6R)-5,10-methenyltetrahydrofolate + NADPH. The catalysed reaction is (6R)-5,10-methenyltetrahydrofolate + H2O = (6R)-10-formyltetrahydrofolate + H(+). It participates in one-carbon metabolism; tetrahydrofolate interconversion. In terms of biological role, catalyzes the oxidation of 5,10-methylenetetrahydrofolate to 5,10-methenyltetrahydrofolate and then the hydrolysis of 5,10-methenyltetrahydrofolate to 10-formyltetrahydrofolate. This Mycolicibacterium paratuberculosis (strain ATCC BAA-968 / K-10) (Mycobacterium paratuberculosis) protein is Bifunctional protein FolD.